Consider the following 143-residue polypeptide: Na(+)/H(+) antiporter subunit B (143 aa).

4 helical membrane passes run 9-31, 36-58, 71-93, and 117-139; these read LILQ…YLFL, APGG…LLAY, FIYV…FVFG, and ATIF…IQTI.

This sequence belongs to the CPA3 antiporters (TC 2.A.63) subunit B family. As to quaternary structure, forms a heterooligomeric complex that consists of seven subunits: MrpA, MrpB, MrpC, MrpD, MrpE, MrpF and MrpG.

The protein resides in the cell membrane. Its function is as follows. Mrp complex is a Na(+)/H(+) antiporter that is considered to be the major Na(+) excretion system in B.subtilis. Has a major role in Na(+) resistance and a minor role in Na(+)- and K(+)-dependent pH homeostasis as compared to TetB. MrpA may be the actual Na(+)/H(+) antiporter, although the six other Mrp proteins are all required for Na(+)/H(+) antiport activity and Na(+) resistance. MrpA is required for initiation of sporulation when external Na(+) concentration increases. Also transports Li(+) but not K(+), Ca(2+) or Mg(2+). The polypeptide is Na(+)/H(+) antiporter subunit B (mrpB) (Bacillus subtilis (strain 168)).